We begin with the raw amino-acid sequence, 562 residues long: Dihydroxy-acid dehydratase (562 aa).

Residue Asp80 participates in Mg(2+) binding. Cys121 serves as a coordination point for [2Fe-2S] cluster. Asp122 and Lys123 together coordinate Mg(2+). The residue at position 123 (Lys123) is an N6-carboxylysine. A [2Fe-2S] cluster-binding site is contributed by Cys194. Glu446 contributes to the Mg(2+) binding site. The active-site Proton acceptor is the Ser472.

This sequence belongs to the IlvD/Edd family. Homodimer. The cofactor is [2Fe-2S] cluster. Requires Mg(2+) as cofactor.

The enzyme catalyses (2R)-2,3-dihydroxy-3-methylbutanoate = 3-methyl-2-oxobutanoate + H2O. It catalyses the reaction (2R,3R)-2,3-dihydroxy-3-methylpentanoate = (S)-3-methyl-2-oxopentanoate + H2O. It functions in the pathway amino-acid biosynthesis; L-isoleucine biosynthesis; L-isoleucine from 2-oxobutanoate: step 3/4. The protein operates within amino-acid biosynthesis; L-valine biosynthesis; L-valine from pyruvate: step 3/4. Functions in the biosynthesis of branched-chain amino acids. Catalyzes the dehydration of (2R,3R)-2,3-dihydroxy-3-methylpentanoate (2,3-dihydroxy-3-methylvalerate) into 2-oxo-3-methylpentanoate (2-oxo-3-methylvalerate) and of (2R)-2,3-dihydroxy-3-methylbutanoate (2,3-dihydroxyisovalerate) into 2-oxo-3-methylbutanoate (2-oxoisovalerate), the penultimate precursor to L-isoleucine and L-valine, respectively. This is Dihydroxy-acid dehydratase from Macrococcus caseolyticus (strain JCSC5402) (Macrococcoides caseolyticum).